Consider the following 219-residue polypeptide: Small ribosomal subunit protein uS5 (219 aa).

The segment at 1 to 32 (MSHPQSRPGGRDGRPRRRREPREEAPWVPKTA) is disordered. Positions 68–131 (LKTEVVDVGI…NQALLNVGPI (64 aa)) constitute an S5 DRBM domain.

It belongs to the universal ribosomal protein uS5 family. As to quaternary structure, part of the 30S ribosomal subunit. Contacts protein S4.

With S4 and S12 plays an important role in translational accuracy. The protein is Small ribosomal subunit protein uS5 (rps5) of Cenarchaeum symbiosum (strain A).